Reading from the N-terminus, the 686-residue chain is DNA ligase (686 aa).

NAD(+) contacts are provided by residues 34 to 38, 83 to 84, and E120; these read DAEYD and SI. Residue K122 is the N6-AMP-lysine intermediate of the active site. Residues R143, E180, K298, and K322 each coordinate NAD(+). Positions 420, 423, 438, and 444 each coordinate Zn(2+). The 84-residue stretch at 603–686 folds into the BRCT domain; the sequence is QSGGILSGKT…ALLGSNKKNG (84 aa).

This sequence belongs to the NAD-dependent DNA ligase family. LigA subfamily. It depends on Mg(2+) as a cofactor. Mn(2+) is required as a cofactor.

It carries out the reaction NAD(+) + (deoxyribonucleotide)n-3'-hydroxyl + 5'-phospho-(deoxyribonucleotide)m = (deoxyribonucleotide)n+m + AMP + beta-nicotinamide D-nucleotide.. In terms of biological role, DNA ligase that catalyzes the formation of phosphodiester linkages between 5'-phosphoryl and 3'-hydroxyl groups in double-stranded DNA using NAD as a coenzyme and as the energy source for the reaction. It is essential for DNA replication and repair of damaged DNA. The chain is DNA ligase from Thiobacillus denitrificans (strain ATCC 25259 / T1).